The sequence spans 294 residues: HTH-type transcriptional regulator DgdR (294 aa).

One can recognise an HTH lysR-type domain in the interval 14–70 (LEIDLLRSFVVIAEVRALSRAAARVGRTQSALSQQMKRLEDIVDQPLFQRTGRGVVL). The segment at residues 31-50 (LSRAAARVGRTQSALSQQMK) is a DNA-binding region (H-T-H motif).

Belongs to the LysR transcriptional regulatory family.

The protein is HTH-type transcriptional regulator DgdR (dgdR) of Burkholderia cepacia (Pseudomonas cepacia).